A 695-amino-acid polypeptide reads, in one-letter code: Zinc finger SWIM domain-containing protein 3 (695 aa).

The interval 434 to 490 (NAPKLRRTRLPSTPPRPKKPFRICGGGDTRLPVEEVEETKADSAQSQLPQPQDQSSK) is disordered. The segment covering 475 to 489 (DSAQSQLPQPQDQSS) has biased composition (low complexity). The SWIM-type zinc-finger motif lies at 530–571 (VAVQLLENSHQVSKDGCSCSCSFQQCYHLPCRHILALLHTSQ).

The polypeptide is Zinc finger SWIM domain-containing protein 3 (Zswim3) (Mus musculus (Mouse)).